The sequence spans 507 residues: Beta-glucosidase 12 (507 aa).

The first 22 residues, 1 to 22 (MRTIYLSLLVFIIVLALNEVMA), serve as a signal peptide directing secretion. Residue Q50 participates in a beta-D-glucoside binding. N-linked (GlcNAc...) asparagine glycosylation is present at N81. Residues H154 and 199 to 200 (NE) each bind a beta-D-glucoside. Residue E200 is the Proton donor of the active site. The cysteines at positions 219 and 227 are disulfide-linked. An N-linked (GlcNAc...) asparagine glycan is attached at N226. Residue Y344 coordinates a beta-D-glucoside. A glycan (N-linked (GlcNAc...) asparagine) is linked at N358. Residues E414, W459, 466-467 (EW), and F475 contribute to the a beta-D-glucoside site. Catalysis depends on E414, which acts as the Nucleophile.

This sequence belongs to the glycosyl hydrolase 1 family.

The catalysed reaction is Hydrolysis of terminal, non-reducing beta-D-glucosyl residues with release of beta-D-glucose.. This Arabidopsis thaliana (Mouse-ear cress) protein is Beta-glucosidase 12.